The primary structure comprises 323 residues: MAAARPEAQSRSSPTPESRSQEPLDLVLVPDDCRPGTPPSDLIEIQVVKVTDTTLVPEPPEPGSFHCALCPAAFRLVSELLFHEHGHLAGAEGGGQGGDPSRCHVCGHSCPGPASLRAHYSLHTGERPYRCALCPRAFKALAPLLRHQHRHGVEPGTSRRPPDTAAVAEQRPGVAPERAEVVMAAAAAGAAVGKPFACRFCAKPFRRSSDMRDHERVHTGERPYHCGICGKGFTQSSVLSGHARIHTGERPFRCTLCDRTFNNSSNFRKHQRTHFHGPGPGLGDSGGQLGSSAAEGSGSGCGVGDPAEEGRGETAKVKVEADQ.

The segment at 1 to 26 is disordered; the sequence is MAAARPEAQSRSSPTPESRSQEPLDL. Over residues 9–18 the composition is skewed to polar residues; the sequence is QSRSSPTPES. Serine 13 is subject to Phosphoserine. 6 C2H2-type zinc fingers span residues 65–87, 101–123, 129–151, 196–218, 224–246, and 252–274; these read FHCA…EHGH, SRCH…YSLH, YRCA…QHRH, FACR…ERVH, YHCG…ARIH, and FRCT…QRTH. Residues 269-323 form a disordered region; that stretch reads KHQRTHFHGPGPGLGDSGGQLGSSAAEGSGSGCGVGDPAEEGRGETAKVKVEADQ. Positions 278–289 are enriched in gly residues; that stretch reads PGPGLGDSGGQL. The segment covering 308–323 has biased composition (basic and acidic residues); sequence EEGRGETAKVKVEADQ. Lysine 318 participates in a covalent cross-link: Glycyl lysine isopeptide (Lys-Gly) (interchain with G-Cter in SUMO2).

It belongs to the krueppel C2H2-type zinc-finger protein family.

The protein localises to the nucleus. In terms of biological role, may be involved in transcriptional regulation. The chain is Zinc finger protein 784 (ZNF784) from Homo sapiens (Human).